A 138-amino-acid chain; its full sequence is Acidic phospholipase A2 1 (138 aa).

Residues 1 to 16 form the signal peptide; sequence MRTLWIVAVWLMGVEG. 7 disulfides stabilise this stretch: C42/C131, C44/C60, C59/C111, C65/C138, C66/C104, C73/C97, and C91/C102. Ca(2+)-binding residues include Y43, G45, and G47. H63 is a catalytic residue. Residue D64 coordinates Ca(2+). The active site involves D105.

As to quaternary structure, monomer. It depends on Ca(2+) as a cofactor. In terms of tissue distribution, expressed by the venom gland.

The protein resides in the secreted. The catalysed reaction is a 1,2-diacyl-sn-glycero-3-phosphocholine + H2O = a 1-acyl-sn-glycero-3-phosphocholine + a fatty acid + H(+). In terms of biological role, snake venom phospholipase that inhibits ADP- and collagen-induced human platelet aggregation. This inhibition is completely inhibited by abolition of catalytic activity in case of collagen as inducer and partially inhibited in case of ADP as inducer. PLA2 catalyzes the calcium-dependent hydrolysis of the 2-acyl groups in 3-sn-phosphoglycerides. This is Acidic phospholipase A2 1 from Macrovipera lebetinus (Levantine viper).